A 629-amino-acid polypeptide reads, in one-letter code: MTNFEQYFDYVKISLASPEKIRQWGERSLPNGQIVGEITKPETINYRTLKPEMDGLFCEKIFGPVKDWECHCGKYKRFRYKGIVCERCGVEVTESRVRRHRMAYIELASPVTHVWYLKGSTSYIALALDLKVKEVEKIVYFHSYVVTQSSEETNLKYKQLLEGYEWKSLEEEIYQNQDENNQIEVGIGAEAIQKLLKDLDLEYIAETLRLEATNPPKSFKTPSLKFNKKMKRLRLIENFIATGADPSWMVFTVIPVIPPDLRPMVQLDGGRFATADLNEFYRRIINRNNRLSRLKSILAPEIIIRNEKRMLQEAVDSLMDNGRRGRTVVGANNRPLKSLSDIIEGKQGRFRQNLLGKRVDYSGRSVIVVGPHLKLHQCGLPREMALELFQPFVIHRLILQGLVNNIKAAKKMIQKNESSIWNVLNEVIQGHPVLLNRAPTLHRLGIQAFEPILVEGRAIKLHPLVCPAFNADFDGDQMAVHVPLSLEAQAEARLLMLAPHNFLSPATGQPIIMPSQDMVLGCYYLTANNPSQQRGASQYFASLEDVVIAYEKKKVDLHAYIWARFDGVIDSDQVKFPIKIETHHDNSVTKFFDNHIIKEDAEHQRIVQYIRTTPGRIIFNKIIQESLVA.

Zn(2+)-binding residues include C70, C72, C85, and C88. Positions 472, 474, and 476 each coordinate Mg(2+).

Belongs to the RNA polymerase beta' chain family. RpoC1 subfamily. In terms of assembly, in plastids the minimal PEP RNA polymerase catalytic core is composed of four subunits: alpha, beta, beta', and beta''. When a (nuclear-encoded) sigma factor is associated with the core the holoenzyme is formed, which can initiate transcription. Mg(2+) is required as a cofactor. Zn(2+) serves as cofactor.

The protein resides in the plastid. The protein localises to the chloroplast. The enzyme catalyses RNA(n) + a ribonucleoside 5'-triphosphate = RNA(n+1) + diphosphate. Functionally, DNA-dependent RNA polymerase catalyzes the transcription of DNA into RNA using the four ribonucleoside triphosphates as substrates. This Porphyra purpurea (Red seaweed) protein is DNA-directed RNA polymerase subunit beta'.